The sequence spans 528 residues: MDPAGRARGQGATAGGLLLRAAAAAKGLREDLWGAAALPWRSLSRIPKREGLGEEDTAVAGHELLLPNERSFQNAAKSNNLDLMEKLFEKKVNINVVNNMNRTALHFAVGRNHLSAVDFLLKHKARVDVADKHGLTVIHLAAWSGSLEVMLMLVKAGADQRAKNQDGMSALHFATQSNHVRIVEYLIQDLHLKDLNQPDEKGRKPFLLAAERGHVEMIEKLTFLNLHTSEKDKGGNTALHLAAKHGHSPAVQVLLAQWQDINEMNELNISSLQIATRNGHASLVNFLLSENVDLHQKVEPKESPLHLVVINNHITVVNSLLSAQHDIDILNQKQQTPLHVAADRGNVELVETLLKAGCDLKAVDKQGKTALAVASRSNHSLVVGMLIKAERYYAWREEHHESIRDPSTGFTLTFKQDHSLETRHIRTLLWDLAYHQLKANEWQRLARSWNFTDDQIRAIEEQWSGNESFREHGHRALLIWLHGTLMTQGDPAKQLYEELVHAGFPKLAEKTRHFKSKTDSNSKKCVVS.

10 ANK repeats span residues 67-96 (PNER…NINV), 100-129 (MNRT…RVDV), 133-162 (HGLT…DQRA), 166-197 (DGMS…DLNQ), 201-230 (KGRK…HTSE), 234-263 (GGNT…DINE), 267-296 (LNIS…DLHQ), 300-329 (PKES…DIDI), 333-362 (KQQT…DLKA), and 366-395 (QGKT…YYAW). The 89-residue stretch at 427–515 (TLLWDLAYHQ…KLAEKTRHFK (89 aa)) folds into the Death domain.

The protein is Ankyrin repeat and death domain-containing protein 1B (ANKDD1B) of Homo sapiens (Human).